The sequence spans 82 residues: UPF0410 protein YeaQ (82 aa).

2 helical membrane passes run 26–46 (GGGF…GGWI) and 57–77 (GFNF…LFIY).

It belongs to the UPF0410 family.

The protein localises to the cell inner membrane. The polypeptide is UPF0410 protein YeaQ (yeaQ) (Escherichia coli O157:H7).